Consider the following 417-residue polypeptide: Glutamate-1-semialdehyde 2,1-aminomutase (417 aa).

At Lys-267 the chain carries N6-(pyridoxal phosphate)lysine.

Belongs to the class-III pyridoxal-phosphate-dependent aminotransferase family. HemL subfamily. As to quaternary structure, homodimer. The cofactor is pyridoxal 5'-phosphate.

Its subcellular location is the cytoplasm. It catalyses the reaction (S)-4-amino-5-oxopentanoate = 5-aminolevulinate. Its pathway is porphyrin-containing compound metabolism; protoporphyrin-IX biosynthesis; 5-aminolevulinate from L-glutamyl-tRNA(Glu): step 2/2. This chain is Glutamate-1-semialdehyde 2,1-aminomutase, found in Solibacter usitatus (strain Ellin6076).